A 563-amino-acid chain; its full sequence is Eukaryotic translation initiation factor 3 subunit D-1 (563 aa).

The interval 98–167 is disordered; it reads VQKPPHQRGR…GPPPKMRESS (70 aa). Residues 100–121 are compositionally biased toward basic residues; the sequence is KPPHQRGRFRNMRNSRSGRGRN. T128 is modified (phosphothreonine). Positions 291–305 are RNA gate; that stretch reads EFDLLTVNESSVEPP.

The protein belongs to the eIF-3 subunit D family. As to quaternary structure, component of the eukaryotic translation initiation factor 3 (eIF-3) complex. The eIF-3 complex interacts with pix.

Its subcellular location is the cytoplasm. MRNA cap-binding component of the eukaryotic translation initiation factor 3 (eIF-3) complex, which is involved in protein synthesis of a specialized repertoire of mRNAs and, together with other initiation factors, stimulates binding of mRNA and methionyl-tRNAi to the 40S ribosome. The eIF-3 complex specifically targets and initiates translation of a subset of mRNAs involved in cell proliferation. In the eIF-3 complex, eif3d specifically recognizes and binds the 7-methylguanosine cap of a subset of mRNAs. This chain is Eukaryotic translation initiation factor 3 subunit D-1, found in Drosophila grimshawi (Hawaiian fruit fly).